A 315-amino-acid chain; its full sequence is tRNA dimethylallyltransferase (315 aa).

15–22 (GPTACGKS) contacts ATP. 17-22 (TACGKS) contributes to the substrate binding site. Interaction with substrate tRNA regions lie at residues 40-43 (DSAL) and 162-166 (QRLIR).

This sequence belongs to the IPP transferase family. As to quaternary structure, monomer. The cofactor is Mg(2+).

It catalyses the reaction adenosine(37) in tRNA + dimethylallyl diphosphate = N(6)-dimethylallyladenosine(37) in tRNA + diphosphate. Catalyzes the transfer of a dimethylallyl group onto the adenine at position 37 in tRNAs that read codons beginning with uridine, leading to the formation of N6-(dimethylallyl)adenosine (i(6)A). In Buchnera aphidicola subsp. Acyrthosiphon pisum (strain APS) (Acyrthosiphon pisum symbiotic bacterium), this protein is tRNA dimethylallyltransferase.